Here is a 302-residue protein sequence, read N- to C-terminus: Glutaminase (302 aa).

Residues Ser61, Asn111, Glu155, Asn162, Tyr186, Tyr238, and Val256 each coordinate substrate.

The protein belongs to the glutaminase family. Homotetramer.

It catalyses the reaction L-glutamine + H2O = L-glutamate + NH4(+). The protein is Glutaminase of Pseudomonas putida (strain ATCC 700007 / DSM 6899 / JCM 31910 / BCRC 17059 / LMG 24140 / F1).